The following is a 540-amino-acid chain: Beta-glucosidase 1B (540 aa).

3 residues coordinate substrate: Q25, H128, and N174. E175 functions as the Proton donor in the catalytic mechanism. Y316 is a substrate binding site. The active-site Nucleophile is E380. Substrate is bound by residues W430 and 437-438 (EW). The segment covering 481–492 (PAAETKKAATPS) has biased composition (low complexity). The interval 481–524 (PAAETKKAATPSPLKPHGAISNGVSKKSSATKEPKSASRKKGRK) is disordered.

This sequence belongs to the glycosyl hydrolase 1 family.

It carries out the reaction Hydrolysis of terminal, non-reducing beta-D-glucosyl residues with release of beta-D-glucose.. Plays an important role in cellulose degradation. Shows hydrolytic activity against several glycosidic compounds. The protein is Beta-glucosidase 1B of Phanerodontia chrysosporium (White-rot fungus).